Reading from the N-terminus, the 243-residue chain is Cysteine-rich secretory protein 2 (243 aa).

A signal peptide spans 1–21 (MALLPVLFLVTVLLPSLPAEG). The SCP domain maps to 41-169 (VNKHNELRKA…SLKYYYVCQY (129 aa)). Disulfide bonds link C189/C196, C192/C201, C205/C238, C214/C232, and C223/C236. The ShKT domain occupies 205-238 (CQYQDLLSNCDSLKNTAGCEHELLKEKCKATCLC).

This sequence belongs to the CRISP family. Interacts with NSUN4 isoform 3. Testis and epididymis.

It localises to the secreted. Functionally, may regulate some ion channels' activity and thereby regulate calcium fluxes during sperm capacitation. In Homo sapiens (Human), this protein is Cysteine-rich secretory protein 2 (CRISP2).